Reading from the N-terminus, the 122-residue chain is uncharacterized protein (122 aa).

Residues 1-24 are Cytoplasmic-facing; the sequence is MKNRKFSNLLLLRLRILCFNKKPA. The helical transmembrane segment at 25-45 threads the bilayer; the sequence is FAATSYAFFFRNFSVLIFIMV. The Extracellular segment spans residues 46 to 57; it reads PDEKENGAAADN. A helical transmembrane segment spans residues 58–78; that stretch reads SFSLLIGRGVVLFLFYCPTAL. Over 79–122 the chain is Cytoplasmic; it reads KMHGPVPAHWFCDKNIEAIQSDGQIRLLRSGPFPWSHGTCIRGA.

The protein localises to the membrane. This is an uncharacterized protein from Saccharomyces cerevisiae (strain ATCC 204508 / S288c) (Baker's yeast).